Reading from the N-terminus, the 179-residue chain is Bifunctional protein PyrR (179 aa).

Residues 39 to 40, 101 to 109, Arg134, and Val158 contribute to the substrate site; these read RR and DDVLFTGRT. Residues 97–109 carry the PRPP-binding motif; sequence VILIDDVLFTGRT.

This sequence belongs to the purine/pyrimidine phosphoribosyltransferase family. PyrR subfamily.

The enzyme catalyses UMP + diphosphate = 5-phospho-alpha-D-ribose 1-diphosphate + uracil. Its function is as follows. Regulates the transcription of the pyrimidine nucleotide (pyr) operon in response to exogenous pyrimidines. Functionally, also displays a weak uracil phosphoribosyltransferase activity which is not physiologically significant. The polypeptide is Bifunctional protein PyrR (Haemophilus ducreyi (strain 35000HP / ATCC 700724)).